Consider the following 744-residue polypeptide: Merozoite surface protein 9 (744 aa).

Positions 1–23 (MMNMKIVLFSLLLFVIRWNIISC) are cleaved as a signal peptide. The interval 77-235 (KELLKEKQYT…VNDEDDVNDE (159 aa)) is interaction with MSP1 and host SLC4A1/Band 3. 4 disordered regions span residues 202–282 (KSQG…ATAY), 459–487 (DNQA…PTED), 512–540 (NNTP…ENFD), and 666–744 (VDAL…EESK). A compositionally biased stretch (polar residues) spans 211–224 (SQNQNENNDNQKYQ). Tandem repeats lie at residues 226 to 231 (VNDEDD), 232 to 237 (VNDEED), 238 to 243 (TNDDED), 244 to 249 (TNDEED), 250 to 255 (TNDDED), 256 to 261 (TNDDED), 262 to 267 (TNDEED), and 268 to 273 (TNDEED). The tract at residues 226 to 273 (VNDEDDVNDEEDTNDDEDTNDEEDTNDDEDTNDDEDTNDEEDTNDEED) is 8 X 6 AA tandem repeats of [VT]-N-D-[ED]-[ED]-D. A compositionally biased stretch (acidic residues) spans 226 to 274 (VNDEDDVNDEEDTNDDEDTNDEEDTNDDEDTNDDEDTNDEEDTNDEEDH). The interval 364–528 (LKDNLINYEF…PPTQSKKKNK (165 aa)) is interaction with MSP1 and host SLC4A1/Band 3. Positions 459–473 (DNQAVDTKSMEEPKV) are enriched in basic and acidic residues. Residues 512–521 (NNTPNVVPPT) are compositionally biased toward low complexity. Positions 644-734 (NQETEEEMEK…QEEEEEEEIV (91 aa)) form a coiled coil. Basic and acidic residues-rich tracts occupy residues 672 to 698 (KNKE…KEKE) and 706 to 719 (EKEK…KEEK). Residues 720–734 (EKEEEQEEEEEEEIV) show a composition bias toward acidic residues.

Belongs to the plasmodium ABRA family. In terms of assembly, forms a complex composed of MSP1, MSP6, MSP7, MSP9 and MSP3; within the complex, MSP6 and MSP9 mediate the binding to the host erythrocyte. Interacts with MSP1 subunits p19 and p42; the interaction is direct. Interacts with host SLC4A1/Band 3 protein (via the 5ABC region). MSP1 subunits p19 or p42, and MSP9 form a co-ligand complex that interacts with host SLC4A1/Band 3 protein. Not glycosylated.

Its subcellular location is the cell membrane. It is found in the parasitophorous vacuole lumen. The protein resides in the secreted. During the asexual blood stage, involved in the sialic acid-independent (SAID) merozoite invasion of host erythrocytes by binding to host SLC4A1/Band 3 protein on the surface of the host erythrocyte. The protein is Merozoite surface protein 9 of Plasmodium falciparum (isolate 7G8).